Here is a 665-residue protein sequence, read N- to C-terminus: GRB2-associated-binding protein 2 (665 aa).

Residue serine 2 is modified to Phosphoserine. In terms of domain architecture, PH spans 8–119 (DVVCTGWLRK…WVQSICQICG (112 aa)). A disordered region spans residues 131 to 183 (RNLSSASHGPRSSPAEFSSSQHLLRERKSSAPSHSSQPTLFTFEPPMTSHMQP). 10 positions are modified to phosphoserine: serine 135, serine 142, serine 143, serine 149, serine 150, serine 160, serine 165, serine 211, serine 220, and serine 261. Over residues 160–170 (SAPSHSSQPTL) the composition is skewed to polar residues. The residue at position 262 (threonine 262) is a Phosphothreonine. Tyrosine 263 carries the phosphotyrosine modification. Threonine 275 is modified (phosphothreonine). A phosphoserine mark is found at serine 278 and serine 282. Threonine 284 carries the post-translational modification Phosphothreonine. Tyrosine 290 carries the phosphotyrosine modification. Threonine 328 carries the phosphothreonine modification. Disordered stretches follow at residues 340–442 (TSGD…ENYV) and 491–517 (PSRG…PTPL). An SH3-binding motif is present at residues 348-355 (PPPRPPKP). Position 365 is a phosphoserine (serine 365). Residues threonine 382 and threonine 388 each carry the phosphothreonine modification. The residue at position 402 (serine 402) is a Phosphoserine. Threonine 405 carries the phosphothreonine modification. Residues 412-423 (GSGESASWSAES) show a composition bias toward low complexity. Phosphoserine occurs at positions 420 and 423. A Phosphotyrosine modification is found at tyrosine 441. The short motif at 499 to 508 (PPPVNRNLKP) is the SH3-binding element. Serine 532 is modified (phosphoserine). Polar residues-rich tracts occupy residues 548–566 (SSSQ…STDS) and 578–600 (NPVS…STGS). The segment at 548–631 (SSSQYCRPIS…SSVTSDEKVD (84 aa)) is disordered. Position 612 is a phosphoserine (serine 612). Tyrosine 632 bears the Phosphotyrosine mark. The span at 646-659 (TMQEWTDVRQSSEP) shows a compositional bias: polar residues. Residues 646-665 (TMQEWTDVRQSSEPSKGAKL) form a disordered region.

The protein belongs to the GAB family. Part of a complex composed of EEIG1, TNFRSF11A/RANK, PLCG2, GAB2, TEC and BTK; complex formation increases in the presence of TNFSF11/RANKL. Interacts with HCK. Interacts with SHC1; may mediate interaction with receptors. Interacts with SYK. Interacts with PI-3 kinase. Interacts with GRB2 (via SH3 2 domain). Interacts (phosphorylated) with PTPN11. Interacts with TNFRSF11A (via cytoplasmic domain). Interacts (phosphorylated) with 14-3-3 family proteins SFN, YWHAB, YWHAE, YWHAG, YWHAH, YWHAQ and YWHAZ; prevents interaction with GRB2 and attenuates GAB2 signaling. Phosphorylated upon EGF stimulation. Phosphorylated on tyrosine residues by HCK upon IL6 signaling. Phosphorylated on tyrosine residue(s) by the thrombopoietin receptor (TPOR), stem cell factor receptor (SCFR), and T-cell and B-cell antigen receptors, gp130, IL-2R and IL-3R. Phosphorylated upon stimulation of TNFRSF11A/RANK by TNFSF11/RANKL. In terms of processing, dephosphorylated by PTPN11.

It is found in the cytoplasm. The protein localises to the cell membrane. Its subcellular location is the membrane raft. Functionally, adapter protein which acts downstream of several membrane receptors including cytokine, antigen, hormone, cell matrix and growth factor receptors to regulate multiple signaling pathways. Regulates osteoclast differentiation mediating the TNFRSF11A/RANK signaling. In allergic response, it plays a role in mast cells activation and degranulation through PI-3-kinase regulation. Also involved in the regulation of cell proliferation and hematopoiesis. This Rattus norvegicus (Rat) protein is GRB2-associated-binding protein 2 (Gab2).